We begin with the raw amino-acid sequence, 206 residues long: Large ribosomal subunit protein uL4 (206 aa).

Residues 65-76 (KQKGTGRARHSS) show a composition bias toward basic residues. The segment at 65–94 (KQKGTGRARHSSARAPQFRGGGKAHGPVVR) is disordered.

It belongs to the universal ribosomal protein uL4 family. Part of the 50S ribosomal subunit.

Functionally, one of the primary rRNA binding proteins, this protein initially binds near the 5'-end of the 23S rRNA. It is important during the early stages of 50S assembly. It makes multiple contacts with different domains of the 23S rRNA in the assembled 50S subunit and ribosome. Forms part of the polypeptide exit tunnel. This Bartonella quintana (strain Toulouse) (Rochalimaea quintana) protein is Large ribosomal subunit protein uL4.